The chain runs to 351 residues: MTEPKLATTHVVGEPTFEGLARFIERNNITKIFVMVGAGISVAAGIPDFRSPHTGLYAKLSRYNLNSPEDAFSLPLLRQQPSVFYNILMDMDLWPGKYCPTTVHHFISLLAKKGMLLCCCTQNIDGLERACGIPESLLVEAHGSFSSASCVDCHAKYDINMARAETRAGKVPHCNQCGGIVKPDVVFFGENLPEAFFNVAGLIEETELLLILGTSLQVHPFADLALMVPSDVPRVLFNLERVGGRMFRFPTDRTPNFRASSYRLSTGNGNGSKISSGDSSNSSSVDGYDQFTLAENDETGVLRDIFFPGDCQVSVRSFAQALGFGEQLDASVREGREIFERTRRREKVVEG.

Residues 10–325 form the Deacetylase sirtuin-type domain; that stretch reads HVVGEPTFEG…RSFAQALGFG (316 aa). Residues 37-57 and 122-125 contribute to the NAD(+) site; these read GAGI…TGLY and QNID. Histidine 142 acts as the Proton acceptor in catalysis. The Zn(2+) site is built by cysteine 150, cysteine 153, cysteine 174, and cysteine 177. Residues 213–215 and 238–240 contribute to the NAD(+) site; these read GTS and NLE. The interval 260-284 is disordered; sequence SSYRLSTGNGNGSKISSGDSSNSSS. Positions 265–284 are enriched in low complexity; sequence STGNGNGSKISSGDSSNSSS. Cysteine 311 is a binding site for NAD(+).

Belongs to the sirtuin family. Class I subfamily. Zn(2+) is required as a cofactor.

The protein localises to the nucleus. It is found in the chromosome. It localises to the telomere. It catalyses the reaction N(6)-acetyl-L-lysyl-[protein] + NAD(+) + H2O = 2''-O-acetyl-ADP-D-ribose + nicotinamide + L-lysyl-[protein]. NAD-dependent protein deacetylase, which is involved in repression of RNA polymerase I-mediated expression immediately adjacent to telomeres. It is however not involved in antigenic variation and subtelomeric variant surface glycoprotein (VSG) gene silencing. Plays a role in DNA damage response. Also has ADP-ribosylation activity in vitro. This chain is NAD-dependent protein deacetylase SIR2rp1 (SIR2rp1), found in Trypanosoma brucei brucei (strain 927/4 GUTat10.1).